A 151-amino-acid polypeptide reads, in one-letter code: Deoxyuridine 5'-triphosphate nucleotidohydrolase (151 aa).

Residues 70 to 72 (RSG), Asn83, 87 to 89 (LID), and Met97 each bind substrate.

Belongs to the dUTPase family. It depends on Mg(2+) as a cofactor.

The enzyme catalyses dUTP + H2O = dUMP + diphosphate + H(+). The protein operates within pyrimidine metabolism; dUMP biosynthesis; dUMP from dCTP (dUTP route): step 2/2. Functionally, this enzyme is involved in nucleotide metabolism: it produces dUMP, the immediate precursor of thymidine nucleotides and it decreases the intracellular concentration of dUTP so that uracil cannot be incorporated into DNA. The polypeptide is Deoxyuridine 5'-triphosphate nucleotidohydrolase (Pseudomonas fluorescens (strain ATCC BAA-477 / NRRL B-23932 / Pf-5)).